A 196-amino-acid chain; its full sequence is ATP-dependent Clp protease proteolytic subunit (196 aa).

Catalysis depends on S101, which acts as the Nucleophile. H126 is a catalytic residue.

This sequence belongs to the peptidase S14 family. Component of the chloroplastic Clp protease core complex.

It localises to the plastid. It is found in the chloroplast stroma. It carries out the reaction Hydrolysis of proteins to small peptides in the presence of ATP and magnesium. alpha-casein is the usual test substrate. In the absence of ATP, only oligopeptides shorter than five residues are hydrolyzed (such as succinyl-Leu-Tyr-|-NHMec, and Leu-Tyr-Leu-|-Tyr-Trp, in which cleavage of the -Tyr-|-Leu- and -Tyr-|-Trp bonds also occurs).. Functionally, cleaves peptides in various proteins in a process that requires ATP hydrolysis. Has a chymotrypsin-like activity. Plays a major role in the degradation of misfolded proteins. In Spinacia oleracea (Spinach), this protein is ATP-dependent Clp protease proteolytic subunit.